Reading from the N-terminus, the 421-residue chain is MKLTKLVALAGAALASPIQLVPREGSFLGFNYGSEKVHGVNLGGWFVLEPFITPSLFEAFGNNDANVPVDEYHYTAWLGKEEAEKRLTDHWNTWITEYDIKAIAENYKLNLVRIPIGYWAFSLLPNDPYVQGQEAYLDRALGWCRKYGVKAWVDVHGVPGSQNGFDNSGLRDHWDWPNADNVQHSINVINYIAGKYGAPEYNDIVVGIELVNEPLGPAIGMEVIEKYFQEGFWTVRHAGSDTAVVIHDAFQEKNYFNNFMTTEQGFWNVVLDHHQYQVFSPGELARNIDQHIAEVCNVGRQASTEYHWRIFGEWSAALTDCTHWLNGVGKGPRLDGSFPGSYYQRSCQGRGDIQTWSEQDKQESRRYVEAQLDAWEHGGDGWIYWTYKTENALEWDFRRLVDNGIFPFPYWDRQFPNQCGF.

Positions 1-15 (MKLTKLVALAGAALA) are cleaved as a signal peptide. Residue E213 is the Proton donor of the active site. 2 cysteine pairs are disulfide-bonded: C296/C419 and C321/C347. The active-site Nucleophile is E313.

The protein belongs to the glycosyl hydrolase 5 (cellulase A) family.

It localises to the secreted. The enzyme catalyses Successive hydrolysis of beta-D-glucose units from the non-reducing ends of (1-&gt;3)-beta-D-glucans, releasing alpha-glucose.. The sequence is that of Glucan 1,3-beta-glucosidase (EXG1) from Yarrowia lipolytica (strain CLIB 122 / E 150) (Yeast).